Consider the following 152-residue polypeptide: Ferredoxin-thioredoxin reductase catalytic chain, chloroplastic (152 aa).

The transit peptide at 1–38 (MTSTVTTTVGCGGLPVRPLSTATRGRPRRCAVRAQAAG) directs the protein to the chloroplast. C91 is a [4Fe-4S] cluster binding site. The active-site Nucleophile is C93. The cysteines at positions 93 and 123 are disulfide-linked. [4Fe-4S] cluster is bound by residues C110, C112, and C121.

It belongs to the ferredoxin thioredoxin reductase beta subunit family. In terms of assembly, heterodimer of subunit A (variable subunit) and subunit B (catalytic subunit). Heterodimeric FTR forms a complex with ferredoxin and thioredoxin. [4Fe-4S] cluster serves as cofactor.

Its subcellular location is the plastid. It is found in the chloroplast. The enzyme catalyses [thioredoxin]-disulfide + 2 reduced [2Fe-2S]-[ferredoxin] + 2 H(+) = [thioredoxin]-dithiol + 2 oxidized [2Fe-2S]-[ferredoxin]. Functionally, catalytic subunit of the ferredoxin-thioredoxin reductase (FTR), which catalyzes the two-electron reduction of thioredoxins by the electrons provided by reduced ferredoxin. This chain is Ferredoxin-thioredoxin reductase catalytic chain, chloroplastic (FTRC), found in Zea mays (Maize).